Reading from the N-terminus, the 527-residue chain is FHA domain-containing protein FhaA (527 aa).

Position 116 is a phosphothreonine (T116). Residues 119-426 (FRARGTVNPD…APGGYSGYGQ (308 aa)) are disordered. Basic and acidic residues predominate over residues 170-188 (RPDEYYDDRYARPQEDPRG). Composition is skewed to low complexity over residues 199-209 (RGGYPPETGGY) and 256-266 (YQDQGRGYPDQ). Over residues 271-283 (YPPPYEQRPPVSP) the composition is skewed to pro residues. A compositionally biased stretch (low complexity) spans 284–299 (GPAAGYGAPGYDQGYR). Over residues 300 to 322 (QSGGYGPSPGGGQPGYGGYGEYG) the composition is skewed to gly residues. The span at 345–366 (RPAYPDQGGYDQGYQQGATTYG) shows a compositional bias: low complexity. The FHA domain maps to 455-504 (NIIGRGQDAQFRLPDTGVSRRHLEIRWDGQVALLADLNSTNGTTVNNAPV).

Interacts with (phosphorylated) MviN and (phosphorylated) PknB via the FHA domain. Binds to the PknB juxtamembrane domain with an affinity that is modulated by the degree and the pattern of phosphorylation of this juxtamembrane domain. Post-translationally, phosphorylated by PknB.

It localises to the cytoplasm. Functionally, regulates cell growth and peptidoglycan synthesis by binding to MviN. May inhibit the late stages of peptidoglycan synthesis. This is FHA domain-containing protein FhaA (fhaA) from Mycobacterium tuberculosis (strain ATCC 25618 / H37Rv).